Consider the following 1828-residue polypeptide: MADERKDEGKAPHWTSASLTEAAAHPHSPEMKDQGGAGEGLSRNANGFPYREEEEGAFGEHRSQGTYSDTKENGINGELTSADRETAEEVSARIVQVVTAEAVAVLKGEQEKEAQHKDQPAALPLAAEETANLPPSPPPSPASEQTATVEEDLLTASKMEFPEQEKFPSSFAEPLDKGEMEFKMPSKPGEDFEHAALVPDTSKTPQDKKDLQGMEGEKLPPVPFAQTFGTNLEDRKQSTEPSIVMPSIGLSAEPPAPKEPKDWFIEMPTESKKDEWGLAAPISPGPLTPMREKDVLEDIPRWEGKQFDSPMPSPFHGGSFTLPLDTMKNERVSEGPRPFAPVFFQSDDKVSLQDPSALATSKESSKDEEPLKDKADKVADVSISEVTTLLGNVHSPVVEGYVGENISGEVKVTTDQEKKETSAPSVQEPTLTETEPQTKLDEKSTVSIEEAVAKKEESFKLRDDKTGVIQTSTEQSFSKEDQKGQEHTIDELKQDSFPISLEQAVTDAAMTSKTLGKVTSEPEAVSERREIQGLFEEKTADKNKLEGAGSATIAEVEMPFYEDKSGMSKYFETSALKEDMTRSTELGSDYYELSDSRGSAQESLDTISPKNQHDEKELQAKASQPSPPAQEAGYSTLAQSYTPDHPSELPEEPSSPQERMFTIDPKVYGEKRDLHSKNKDDLTLSRSLGLGGRSAIEQRSMSINLPMSCLDSIALGFNFGRGHDLSPLASDILTNTSGSMDEGDDYLPPTTPAVEKMPCFPIESKEEEDKAEQAKVTGGQTIQVETSSESPFPAKEYYKNGTVMAPDLPEMLDLAGTRSRLASVSADAEVARRKSVPSEAMLAESSTSLPPVADESPVTVKPDSQLEDMGYCVFNKYTVPLPSPVQDSENLSGESGSFYEGTDDKVRRDLATDLSLIEVKLAAAGRVKDEFTAEKEASPPTSADKSRLSREFDHDRKANDKLDTVLEKSEEHIDSKEHAKESEEMGGKVELFGLGITYDQASTKELITTKDTSPEKTEKGLSSVPEVAEVEPTTKADQGLDFAATKAEPSQLDIKVSDFGQMASGMNVDAGKAIELKFEVAQELTLSSEAPQEADSFMGVESGHIKEGGKVNETEVKEKVTKPDLVHQEAVDKEESYESSGEHESLTMESLKPDEGKKETSPETSLIQDEVALKLSVEIPCPPPVSEADLSTDEKGEVQMEFIQLPKEESTETPDIPAIPSDVTQPQPEAIVSEPAEVPSEEEEIEAGGEYDKLLFRSDTLQISDLLVSESREEFVETCPGELKGVVESVVTIEDDFITVVQTTTDEGESGSHSVRFAAPAQPEEERRPRPHDEELEIEMAAEAQAEPKDGSPDAPATPEKEEVAFSEYKTETYDDYKDETTIDDSIMDADSLWVDTQDDDRSILTEQLETIPKEERAEKDARRPSLEKHRKEKPFKTGRGRISTPERKVAKKEPSTVSRDEVRRKKAVYKKAELAKKSEVQAHSPSRKLILKPAIKYTRPTHLSCVKRKTTAASGDLAQAPGAFKQAKDKVTDGISKSPEKRSSLPRPSSILPPRRGVSGDREENSFSLNSSISSARRTTRSEPIRRAGKSGTSTPTTPGSTAITPGTPPSYSSRTPGTPGTPSYPRTPGTPKSGILVPSEKKVAIIRTPPKSPATPKQLRLINQPLPDLKNVKSKIGSTDNIKYQPKGGQVQIVTKKIDLSHVTSKCGSLKNIRHRPGGGRVKIESVKLDFKEKAQAKVGSLDNAHHVPGGGNVKIDSQKLNFREHAKARVDHGAEIITQSPSRSSVASPRRLSNVSSSGSINLLESPQLATLAEDVTAALAKQGL.

A compositionally biased stretch (basic and acidic residues) spans 1–11 (MADERKDEGKA). 3 disordered regions span residues 1-86 (MADE…DRET), 109-379 (EQEK…DKVA), and 397-490 (VVEG…HTID). Serine 28 is subject to Phosphoserine. Residues 109–119 (EQEKEAQHKDQ) show a composition bias toward basic and acidic residues. The segment covering 120 to 133 (PAALPLAAEETANL) has biased composition (low complexity). Serine 136, serine 140, and serine 143 each carry phosphoserine. 3 stretches are compositionally biased toward basic and acidic residues: residues 174-194 (PLDKGEMEFKMPSKPGEDFEH), 205-218 (PQDKKDLQGMEGEK), and 256-276 (APKEPKDWFIEMPTESKKDEW). Serine 283 carries the phosphoserine modification. Positions 290–306 (MREKDVLEDIPRWEGKQ) are enriched in basic and acidic residues. A phosphoserine mark is found at serine 333 and serine 346. 3 stretches are compositionally biased toward basic and acidic residues: residues 363–379 (ESSKDEEPLKDKADKVA), 412–421 (VTTDQEKKET), and 451–466 (AVAKKEESFKLRDDKT). Serine 476 bears the Phosphoserine mark. Basic and acidic residues predominate over residues 477-490 (FSKEDQKGQEHTID). A phosphoserine mark is found at serine 496, serine 520, serine 550, serine 596, serine 599, serine 603, serine 608, and serine 626. The interval 573 to 684 (TSALKEDMTR…HSKNKDDLTL (112 aa)) is disordered. The span at 596–610 (SRGSAQESLDTISPK) shows a compositional bias: polar residues. Positions 667 to 683 (VYGEKRDLHSKNKDDLT) are enriched in basic and acidic residues. Residues 702–745 (SINLPMSCLDSIALGFNFGRGHDLSPLASDILTNTSGSMDEGDD) are interaction with KNDC1. 2 positions are modified to phosphoserine: serine 726 and serine 730. Threonine 734 carries the phosphothreonine modification. Residues serine 737 and serine 739 each carry the phosphoserine modification. A Phosphotyrosine modification is found at tyrosine 746. Disordered stretches follow at residues 765 to 794 (KEEEDKAEQAKVTGGQTIQVETSSESPFPA) and 823 to 863 (SVSA…VKPD). Positions 778 to 790 (GGQTIQVETSSES) are enriched in polar residues. A phosphoserine mark is found at serine 823, serine 883, serine 892, and serine 938. Disordered stretches follow at residues 930–986 (EFTA…EEMG) and 1005–1044 (ELITTKDTSPEKTEKGLSSVPEVAEVEPTTKADQGLDFAA). Positions 944 to 986 (DKSRLSREFDHDRKANDKLDTVLEKSEEHIDSKEHAKESEEMG) are enriched in basic and acidic residues. Residues serine 1050, serine 1139, serine 1140, and serine 1145 each carry the phosphoserine modification. Disordered regions lie at residues 1087–1165 (SSEA…PETS), 1206–1228 (PKEESTETPDIPAIPSDVTQPQP), 1304–1373 (TTDE…KTET), and 1405–1640 (LTEQ…ILVP). The span at 1103 to 1161 (GHIKEGGKVNETEVKEKVTKPDLVHQEAVDKEESYESSGEHESLTMESLKPDEGKKETS) shows a compositional bias: basic and acidic residues. Threonine 1160 carries the post-translational modification Phosphothreonine. 2 positions are modified to phosphoserine: serine 1161 and serine 1165. The segment covering 1324-1333 (EEERRPRPHD) has biased composition (basic and acidic residues). Residue serine 1352 is modified to Phosphoserine. Threonine 1358 bears the Phosphothreonine mark. Composition is skewed to basic and acidic residues over residues 1359–1373 (PEKEEVAFSEYKTET) and 1412–1430 (IPKEERAEKDARRPSLEKH). A compositionally biased stretch (basic residues) spans 1431 to 1440 (RKEKPFKTGR). Composition is skewed to basic and acidic residues over residues 1445–1464 (TPERKVAKKEPSTVSRDEVR), 1471–1481 (KKAELAKKSEV), and 1527–1544 (QAKDKVTDGISKSPEKRS). Residues 1452 to 1472 (KKEPSTVSRDEVRRKKAVYKK) are calmodulin-binding. Phosphoserine is present on serine 1539. The segment covering 1546–1557 (LPRPSSILPPRR) has biased composition (low complexity). A Phosphoserine modification is found at serine 1560. Composition is skewed to low complexity over residues 1567-1578 (SFSLNSSISSAR) and 1591-1607 (KSGTSTPTTPGSTAITP). A Phosphoserine modification is found at serine 1592. Residues threonine 1606, threonine 1609, threonine 1620, threonine 1623, and threonine 1650 each carry the phosphothreonine modification. The segment covering 1613-1623 (YSSRTPGTPGT) has biased composition (polar residues). The residue at position 1654 (serine 1654) is a Phosphoserine. 3 Tau/MAP repeats span residues 1662–1692 (RLINQPLPDLKNVKSKIGSTDNIKYQPKGGQ), 1693–1723 (VQIVTKKIDLSHVTSKCGSLKNIRHRPGGGR), and 1724–1755 (VKIESVKLDFKEKAQAKVGSLDNAHHVPGGGN). Serine 1680 carries the post-translational modification Phosphoserine; by MARK1. The interval 1778–1802 (EIITQSPSRSSVASPRRLSNVSSSG) is disordered. Residues serine 1783, serine 1788, serine 1791, serine 1796, and serine 1809 each carry the phosphoserine modification. A compositionally biased stretch (low complexity) spans 1783–1796 (SPSRSSVASPRRLS).

In terms of assembly, interacts with KNDC1 (via KIND2); the interaction enhances MAP2 phosphorylation and localizes KNDC1 to dendrites. Interacts with DPYSL5. Post-translationally, phosphorylated at serine residues in K-X-G-S motifs by causing MAP/microtubule affinity-regulating kinase (MARK1 or MARK2), detachment from microtubules, and their disassembly. The interaction with KNDC1 enhances MAP2 threonine phosphorylation.

It localises to the cytoplasm. The protein resides in the cytoskeleton. The protein localises to the cell projection. Its subcellular location is the dendrite. Functionally, the exact function of MAP2 is unknown but MAPs may stabilize the microtubules against depolymerization. They also seem to have a stiffening effect on microtubules. The polypeptide is Microtubule-associated protein 2 (Map2) (Mus musculus (Mouse)).